The chain runs to 462 residues: Hemopexin (462 aa).

Residues 1–23 (MARVLGAPVALGLWSLCWSLAIA) form the signal peptide. O-linked (GalNAc...) threonine glycosylation is found at threonine 24 and threonine 29. The segment at 29–48 (TSAHGNVAEGETKPDPDVTE) is disordered. The interval 30-40 (SAHGNVAEGET) is O-glycosylated at one site. The segment covering 38–48 (GETKPDPDVTE) has biased composition (basic and acidic residues). Cystine bridges form between cysteine 50–cysteine 231, cysteine 149–cysteine 154, and cysteine 188–cysteine 200. Hemopexin repeat units lie at residues 53 to 93 (GWSF…WKNF), 94 to 139 (PSPV…FPGI), 140 to 184 (PSPL…SWPA), and 185 to 231 (VGNC…FMPC). An N-linked (GlcNAc...) (complex) asparagine glycan is attached at asparagine 64. Histidine 79 serves as a coordination point for heme. Histidine 150 provides a ligand contact to heme. A glycan (N-linked (GlcNAc...) (complex) asparagine) is linked at asparagine 187. Heme is bound at residue histidine 236. 2 N-linked (GlcNAc...) asparagine glycosylation sites follow: asparagine 240 and asparagine 246. Intrachain disulfides connect cysteine 257-cysteine 460, cysteine 366-cysteine 408, and cysteine 418-cysteine 435. Hemopexin repeat units follow at residues 259-304 (PHLV…WPQG), 305-352 (PSAV…VGTP), 357-396 (LDSV…WTEL), and 400-450 (HEKV…ALPQ). Histidine 293 contacts heme. N-linked (GlcNAc...) (complex) asparagine glycosylation is present at asparagine 453.

The protein belongs to the hemopexin family. In terms of assembly, interacts with FLVCR1. As to quaternary structure, (Microbial infection) Interacts with hepatitis E virus/HEV protein ORF3. In terms of processing, N- and O-glycosylated. O-glycosylated with core 1 or possibly core 8 glycans. O-glycosylation in the 30-40 region is minor compared to glycosylation at Thr-24 and Thr-29. Expressed by the liver and secreted in plasma.

It localises to the secreted. Binds heme and transports it to the liver for breakdown and iron recovery, after which the free hemopexin returns to the circulation. This is Hemopexin (HPX) from Homo sapiens (Human).